We begin with the raw amino-acid sequence, 307 residues long: Cytochrome c1, heme protein, mitochondrial (307 aa).

The transit peptide at 1–56 (MFQFVKKKNEFLKFARLGSRAFTQNAQKTHSKGSNIALVSSSLLSVGMIALYYNVY) directs the protein to the mitochondrion. At 57-269 (GPSLSAGTPK…EPELDIRKKM (213 aa)) the chain is on the mitochondrial intermembrane side. Positions 89–259 (ASLRRGFQVY…DVVNFLHWAS (171 aa)) constitute a Cytochrome c domain. Heme c is bound by residues C102, C105, H106, and M225. A helical transmembrane segment spans residues 270–287 (GFQVITVLTILTALSMWY). Over 288 to 307 (KRFKWTPIKNRKIFYQRPIK) the chain is Mitochondrial matrix.

It belongs to the cytochrome c family. In terms of assembly, component of the ubiquinol-cytochrome c oxidoreductase (cytochrome b-c1 complex, complex III, CIII), a multisubunit enzyme composed of 3 respiratory subunits cytochrome b, cytochrome c1 and Rieske protein, 2 core protein subunits, and additional low-molecular weight protein subunits. The complex exists as an obligatory dimer and forms supercomplexes (SCs) in the inner mitochondrial membrane with cytochrome c oxidase (complex IV, CIV). Heme c is required as a cofactor.

It localises to the mitochondrion inner membrane. The enzyme catalyses a quinol + 2 Fe(III)-[cytochrome c](out) = a quinone + 2 Fe(II)-[cytochrome c](out) + 2 H(+)(out). Its function is as follows. Component of the ubiquinol-cytochrome c oxidoreductase, a multisubunit transmembrane complex that is part of the mitochondrial electron transport chain which drives oxidative phosphorylation. The respiratory chain contains 3 multisubunit complexes succinate dehydrogenase (complex II, CII), ubiquinol-cytochrome c oxidoreductase (cytochrome b-c1 complex, complex III, CIII) and cytochrome c oxidase (complex IV, CIV), that cooperate to transfer electrons derived from NADH and succinate to molecular oxygen, creating an electrochemical gradient over the inner membrane that drives transmembrane transport and the ATP synthase. The cytochrome b-c1 complex catalyzes electron transfer from ubiquinol to cytochrome c, linking this redox reaction to translocation of protons across the mitochondrial inner membrane, with protons being carried across the membrane as hydrogens on the quinol. In the process called Q cycle, 2 protons are consumed from the matrix, 4 protons are released into the intermembrane space and 2 electrons are passed to cytochrome c. Cytochrome c1 is a catalytic core subunit containing a c-type heme. It transfers electrons from the [2Fe-2S] iron-sulfur cluster of the Rieske protein to cytochrome c. This is Cytochrome c1, heme protein, mitochondrial (cyt1) from Schizosaccharomyces pombe (strain 972 / ATCC 24843) (Fission yeast).